The sequence spans 391 residues: Elongation factor Tu (391 aa).

In terms of domain architecture, tr-type G spans K10 to V201. The tract at residues G19 to T26 is G1. G19–T26 contributes to the GTP binding site. T26 is a binding site for Mg(2+). Residues G55–S59 are G2. The interval D76 to G79 is G3. Residues D76–H80 and N131–D134 contribute to the GTP site. A G4 region spans residues N131–D134. The G5 stretch occupies residues S169 to L171.

This sequence belongs to the TRAFAC class translation factor GTPase superfamily. Classic translation factor GTPase family. EF-Tu/EF-1A subfamily. In terms of assembly, monomer.

Its subcellular location is the cytoplasm. It catalyses the reaction GTP + H2O = GDP + phosphate + H(+). Its function is as follows. GTP hydrolase that promotes the GTP-dependent binding of aminoacyl-tRNA to the A-site of ribosomes during protein biosynthesis. The protein is Elongation factor Tu of Mesorhizobium japonicum (strain LMG 29417 / CECT 9101 / MAFF 303099) (Mesorhizobium loti (strain MAFF 303099)).